Reading from the N-terminus, the 546-residue chain is Probable sucrose-6-phosphate hydrolase (546 aa).

Residues 105–108, Q124, 167–168, 228–229, and E283 contribute to the substrate site; these read LLND, FS, and RD. D108 is an active-site residue.

The protein belongs to the glycosyl hydrolase 32 family.

It is found in the cytoplasm. It catalyses the reaction Hydrolysis of terminal non-reducing beta-D-fructofuranoside residues in beta-D-fructofuranosides.. Its pathway is glycan biosynthesis; sucrose metabolism. Functionally, enables the bacterium to metabolize sucrose as a sole carbon source. The polypeptide is Probable sucrose-6-phosphate hydrolase (cscA) (Vibrio cholerae serotype O1 (strain ATCC 39541 / Classical Ogawa 395 / O395)).